A 247-amino-acid polypeptide reads, in one-letter code: Leucyl/phenylalanyl-tRNA--protein transferase (247 aa).

This sequence belongs to the L/F-transferase family.

Its subcellular location is the cytoplasm. The enzyme catalyses N-terminal L-lysyl-[protein] + L-leucyl-tRNA(Leu) = N-terminal L-leucyl-L-lysyl-[protein] + tRNA(Leu) + H(+). It carries out the reaction N-terminal L-arginyl-[protein] + L-leucyl-tRNA(Leu) = N-terminal L-leucyl-L-arginyl-[protein] + tRNA(Leu) + H(+). It catalyses the reaction L-phenylalanyl-tRNA(Phe) + an N-terminal L-alpha-aminoacyl-[protein] = an N-terminal L-phenylalanyl-L-alpha-aminoacyl-[protein] + tRNA(Phe). Functions in the N-end rule pathway of protein degradation where it conjugates Leu, Phe and, less efficiently, Met from aminoacyl-tRNAs to the N-termini of proteins containing an N-terminal arginine or lysine. This is Leucyl/phenylalanyl-tRNA--protein transferase from Solidesulfovibrio magneticus (strain ATCC 700980 / DSM 13731 / RS-1) (Desulfovibrio magneticus).